The primary structure comprises 457 residues: Trigger factor (457 aa).

The PPIase FKBP-type domain occupies 162 to 243 (GDFVSIDLSA…VQTVKERELP (82 aa)). Residues 434 to 457 (AELFGSSEDETEADASDSAESEDK) form a disordered region. Residues 440–457 (SEDETEADASDSAESEDK) show a composition bias toward acidic residues.

Belongs to the FKBP-type PPIase family. Tig subfamily.

The protein localises to the cytoplasm. The catalysed reaction is [protein]-peptidylproline (omega=180) = [protein]-peptidylproline (omega=0). Its function is as follows. Involved in protein export. Acts as a chaperone by maintaining the newly synthesized protein in an open conformation. Functions as a peptidyl-prolyl cis-trans isomerase. The polypeptide is Trigger factor (Rhodococcus erythropolis (strain PR4 / NBRC 100887)).